A 576-amino-acid polypeptide reads, in one-letter code: Sulfite reductase [NADPH] hemoprotein beta-component (576 aa).

Residues cysteine 435, cysteine 441, cysteine 480, and cysteine 484 each coordinate [4Fe-4S] cluster. Siroheme is bound at residue cysteine 484.

It belongs to the nitrite and sulfite reductase 4Fe-4S domain family. In terms of assembly, alpha(8)-beta(8). The alpha component is a flavoprotein, the beta component is a hemoprotein. Siroheme is required as a cofactor. It depends on [4Fe-4S] cluster as a cofactor.

The enzyme catalyses hydrogen sulfide + 3 NADP(+) + 3 H2O = sulfite + 3 NADPH + 4 H(+). It participates in sulfur metabolism; hydrogen sulfide biosynthesis; hydrogen sulfide from sulfite (NADPH route): step 1/1. Component of the sulfite reductase complex that catalyzes the 6-electron reduction of sulfite to sulfide. This is one of several activities required for the biosynthesis of L-cysteine from sulfate. The protein is Sulfite reductase [NADPH] hemoprotein beta-component of Yersinia pestis bv. Antiqua (strain Antiqua).